The following is a 160-amino-acid chain: Zinc finger A20 and AN1 domain-containing stress-associated protein 5 (160 aa).

The A20-type zinc finger occupies 20–54 (TTTTTLCTNNCGVTANPATNNMCQKCFNASLVSAA). The Zn(2+) site is built by Cys-26, Cys-30, Cys-42, Cys-45, Cys-101, Cys-104, Cys-115, Cys-117, Cys-122, His-125, His-131, and Cys-133. An AN1-type zinc finger spans residues 95–141 (QQIVNRCSGCRKKVGLTGFRCRCGELFCSEHRYSDRHDCSYDYKTAG).

Its function is as follows. May be involved in environmental stress response. The sequence is that of Zinc finger A20 and AN1 domain-containing stress-associated protein 5 (SAP5) from Arabidopsis thaliana (Mouse-ear cress).